Reading from the N-terminus, the 99-residue chain is SVVKSEDFTLPAYVDRRDYPLPDVAHVKHLSASQKALKEKEKASWSSLSMDEKVELYRIKFKESFAEMNRRSNEWKTVVGTAMFFIGITALVIMWEKLY.

Over 1–73 the chain is Mitochondrial matrix; that stretch reads SVVKSEDFTL…SFAEMNRRSN (73 aa). K4 bears the N6-acetyllysine; alternate mark. Residue K4 is modified to N6-succinyllysine; alternate. The residue at position 28 (K28) is an N6-acetyllysine. 2 positions are modified to phosphoserine: S31 and S33. K35 carries the N6-acetyllysine; alternate modification. At K35 the chain carries N6-succinyllysine; alternate. K42 carries the post-translational modification N6-acetyllysine. Residues 74-99 form a helical membrane-spanning segment; sequence EWKTVVGTAMFFIGITALVIMWEKLY.

This sequence belongs to the cytochrome c oxidase IV family. As to quaternary structure, component of the cytochrome c oxidase (complex IV, CIV), a multisubunit enzyme composed of 14 subunits. The complex is composed of a catalytic core of 3 subunits MT-CO1, MT-CO2 and MT-CO3, encoded in the mitochondrial DNA, and 11 supernumerary subunits COX4I, COX5A, COX5B, COX6A, COX6B, COX6C, COX7A, COX7B, COX7C, COX8 and NDUFA4, which are encoded in the nuclear genome. The complex exists as a monomer or a dimer and forms supercomplexes (SCs) in the inner mitochondrial membrane with NADH-ubiquinone oxidoreductase (complex I, CI) and ubiquinol-cytochrome c oxidoreductase (cytochrome b-c1 complex, complex III, CIII), resulting in different assemblies (supercomplex SCI(1)III(2)IV(1) and megacomplex MCI(2)III(2)IV(2)). Interacts with PHB2; the interaction decreases in absence of SPHK2. Interacts with AFG1L. Interacts with ABCB7; this interaction allows the regulation of cellular iron homeostasis and cellular reactive oxygen species (ROS) levels in cardiomyocytes. Interacts with FLVCR2; this interaction occurs in the absence of heme and is disrupted upon heme binding. Interacts with IRGC.

The protein resides in the mitochondrion inner membrane. It participates in energy metabolism; oxidative phosphorylation. In terms of biological role, component of the cytochrome c oxidase, the last enzyme in the mitochondrial electron transport chain which drives oxidative phosphorylation. The respiratory chain contains 3 multisubunit complexes succinate dehydrogenase (complex II, CII), ubiquinol-cytochrome c oxidoreductase (cytochrome b-c1 complex, complex III, CIII) and cytochrome c oxidase (complex IV, CIV), that cooperate to transfer electrons derived from NADH and succinate to molecular oxygen, creating an electrochemical gradient over the inner membrane that drives transmembrane transport and the ATP synthase. Cytochrome c oxidase is the component of the respiratory chain that catalyzes the reduction of oxygen to water. Electrons originating from reduced cytochrome c in the intermembrane space (IMS) are transferred via the dinuclear copper A center (CU(A)) of subunit 2 and heme A of subunit 1 to the active site in subunit 1, a binuclear center (BNC) formed by heme A3 and copper B (CU(B)). The BNC reduces molecular oxygen to 2 water molecules using 4 electrons from cytochrome c in the IMS and 4 protons from the mitochondrial matrix. The polypeptide is Cytochrome c oxidase subunit 4 isoform 1, mitochondrial (COX4I1) (Mandrillus sphinx (Mandrill)).